The sequence spans 100 residues: Urease subunit gamma (100 aa).

This sequence belongs to the urease gamma subunit family. Heterotrimer of UreA (gamma), UreB (beta) and UreC (alpha) subunits. Three heterotrimers associate to form the active enzyme.

The protein resides in the cytoplasm. The catalysed reaction is urea + 2 H2O + H(+) = hydrogencarbonate + 2 NH4(+). It participates in nitrogen metabolism; urea degradation; CO(2) and NH(3) from urea (urease route): step 1/1. This Prochlorococcus marinus (strain MIT 9301) protein is Urease subunit gamma.